We begin with the raw amino-acid sequence, 256 residues long: Protein crossbronx-like (256 aa).

Residues 17-179 form the UBC core domain; that stretch reads NQGYQVLAEY…AKASIVWSWK (163 aa).

The protein belongs to the ubiquitin-conjugating enzyme family. FTS subfamily.

The chain is Protein crossbronx-like from Drosophila mojavensis (Fruit fly).